A 307-amino-acid polypeptide reads, in one-letter code: Thiamine-monophosphate kinase (307 aa).

Mg(2+) contacts are provided by Asp26, Thr37, Thr38, and Asp39. His46 contributes to the substrate binding site. Mg(2+)-binding residues include Asp68 and Asp117. Residues 116 to 117 (GD) and Arg140 contribute to the ATP site. Asp207 is a Mg(2+) binding site. An ATP-binding site is contributed by Thr209. Asp210 contributes to the Mg(2+) binding site. Residues Glu254 and Phe304 each coordinate substrate.

Belongs to the thiamine-monophosphate kinase family.

It carries out the reaction thiamine phosphate + ATP = thiamine diphosphate + ADP. Its pathway is cofactor biosynthesis; thiamine diphosphate biosynthesis; thiamine diphosphate from thiamine phosphate: step 1/1. Functionally, catalyzes the ATP-dependent phosphorylation of thiamine-monophosphate (TMP) to form thiamine-pyrophosphate (TPP), the active form of vitamin B1. The polypeptide is Thiamine-monophosphate kinase (Leptospira interrogans serogroup Icterohaemorrhagiae serovar Lai (strain 56601)).